Reading from the N-terminus, the 607-residue chain is 1-deoxy-D-xylulose-5-phosphate synthase (607 aa).

Thiamine diphosphate-binding positions include His63 and 104–106; that span reads GHS. Asp135 is a Mg(2+) binding site. Residues 136–137, Asn164, Tyr271, and Glu351 each bind thiamine diphosphate; that span reads GA. Residue Asn164 participates in Mg(2+) binding.

Belongs to the transketolase family. DXPS subfamily. Homodimer. The cofactor is Mg(2+). Requires thiamine diphosphate as cofactor.

It catalyses the reaction D-glyceraldehyde 3-phosphate + pyruvate + H(+) = 1-deoxy-D-xylulose 5-phosphate + CO2. The protein operates within metabolic intermediate biosynthesis; 1-deoxy-D-xylulose 5-phosphate biosynthesis; 1-deoxy-D-xylulose 5-phosphate from D-glyceraldehyde 3-phosphate and pyruvate: step 1/1. Catalyzes the acyloin condensation reaction between C atoms 2 and 3 of pyruvate and glyceraldehyde 3-phosphate to yield 1-deoxy-D-xylulose-5-phosphate (DXP). This chain is 1-deoxy-D-xylulose-5-phosphate synthase, found in Campylobacter hominis (strain ATCC BAA-381 / DSM 21671 / CCUG 45161 / LMG 19568 / NCTC 13146 / CH001A).